Reading from the N-terminus, the 520-residue chain is Protein FAM124A (520 aa).

2 disordered regions span residues 1–34 (MDRKAGEDDWEDSGAETGGSDYSRLSSTSSELSV) and 311–334 (FKSGKHKGRAGNGQVQHFGGSQMD). Low complexity predominate over residues 20-32 (SDYSRLSSTSSEL).

The protein belongs to the FAM124 family.

This Xenopus laevis (African clawed frog) protein is Protein FAM124A (fam124a).